Consider the following 122-residue polypeptide: Phosphoribosyl-ATP pyrophosphatase (122 aa).

This sequence belongs to the PRA-PH family.

It is found in the cytoplasm. The catalysed reaction is 1-(5-phospho-beta-D-ribosyl)-ATP + H2O = 1-(5-phospho-beta-D-ribosyl)-5'-AMP + diphosphate + H(+). The protein operates within amino-acid biosynthesis; L-histidine biosynthesis; L-histidine from 5-phospho-alpha-D-ribose 1-diphosphate: step 2/9. In Burkholderia mallei (strain NCTC 10247), this protein is Phosphoribosyl-ATP pyrophosphatase.